The following is a 367-amino-acid chain: Uptake hydrogenase small subunit (367 aa).

A signal peptide (tat-type signal) is located at residues 1-45 (MTPTETFYEVMRRQGVTRRSFLKFCSLTATALGLGPAYTSEIAHA). Cys-62, Cys-65, Cys-160, Cys-194, His-232, Cys-235, Cys-260, and Cys-266 together coordinate [4Fe-4S] cluster. Positions 275, 294, and 297 each coordinate [3Fe-4S] cluster.

This sequence belongs to the [NiFe]/[NiFeSe] hydrogenase small subunit family. In terms of assembly, heterodimer of a large and a small subunit. Requires [4Fe-4S] cluster as cofactor. [3Fe-4S] cluster is required as a cofactor. In terms of processing, predicted to be exported by the Tat system. The position of the signal peptide cleavage has been experimentally proven.

Its subcellular location is the cell membrane. The enzyme catalyses H2 + A = AH2. In terms of biological role, this enzyme recycles the H(2) produced by nitrogenase to increase the production of ATP and to protect nitrogenase against inhibition or damage by O(2) under carbon- or phosphate-limited conditions. This Afipia carboxidovorans (strain ATCC 49405 / DSM 1227 / KCTC 32145 / OM5) (Oligotropha carboxidovorans) protein is Uptake hydrogenase small subunit (hoxS).